We begin with the raw amino-acid sequence, 330 residues long: ADP-L-glycero-D-manno-heptose-6-epimerase (330 aa).

Residues 11–12 (FI), 32–33 (DN), lysine 39, lysine 54, 75–79 (EGACS), and asparagine 92 each bind NADP(+). Tyrosine 139 serves as the catalytic Proton acceptor. Lysine 143 contacts NADP(+). Asparagine 168 serves as a coordination point for substrate. The NADP(+) site is built by valine 169 and lysine 177. Lysine 177 serves as the catalytic Proton acceptor. Substrate contacts are provided by residues arginine 179, histidine 186, 200-203 (FGEY), arginine 213, and tyrosine 292.

Belongs to the NAD(P)-dependent epimerase/dehydratase family. HldD subfamily. As to quaternary structure, homopentamer. NADP(+) serves as cofactor.

The enzyme catalyses ADP-D-glycero-beta-D-manno-heptose = ADP-L-glycero-beta-D-manno-heptose. It functions in the pathway nucleotide-sugar biosynthesis; ADP-L-glycero-beta-D-manno-heptose biosynthesis; ADP-L-glycero-beta-D-manno-heptose from D-glycero-beta-D-manno-heptose 7-phosphate: step 4/4. In terms of biological role, catalyzes the interconversion between ADP-D-glycero-beta-D-manno-heptose and ADP-L-glycero-beta-D-manno-heptose via an epimerization at carbon 6 of the heptose. The protein is ADP-L-glycero-D-manno-heptose-6-epimerase of Paraburkholderia phymatum (strain DSM 17167 / CIP 108236 / LMG 21445 / STM815) (Burkholderia phymatum).